The sequence spans 400 residues: MDKSLFEQARPILEQIQDNGFEAYYVGGSVRDYVMGRNIHDIDITTSATPDEIESIFSHTIPVGKEHGTINVVFNDENYEVTTFRAEEDYVDHRRPSGVTFVRDLYEDLQRRDFTMNAIAMDTAYKLYDYFDGQQDINNRIIRTVGIAEERFQEDALRMIRCLRFQSQLSFDIATETFEAMRIQMADIKFLSIERIVIELTKLMRGINVEKSFNHLKSLKAFNYMPYFEHLDMNQINVTEAIDLELLIAIVSVKFDINYSLKPLKLSNRQVKDINQYIQIMNALPSIITKEQLKMFVYDYDTHLIKNVMVAADVIKANDIQGHEPLIVNLQTIDETLHRLPMHNRKDMMVNGGVLMAHLNAKSGPWLKDVLRQIEIAIVTGKVSNEETEILKWVDNHVKI.

Positions 28 and 31 each coordinate ATP. Positions 28 and 31 each coordinate CTP. Residues Asp-41 and Asp-43 each contribute to the Mg(2+) site. Arg-112, Asp-155, Arg-158, Arg-161, and Arg-164 together coordinate ATP. The CTP site is built by Arg-112, Asp-155, Arg-158, Arg-161, and Arg-164.

Belongs to the tRNA nucleotidyltransferase/poly(A) polymerase family. Bacterial CCA-adding enzyme type 3 subfamily. As to quaternary structure, homodimer. It depends on Mg(2+) as a cofactor.

It catalyses the reaction a tRNA precursor + 2 CTP + ATP = a tRNA with a 3' CCA end + 3 diphosphate. The catalysed reaction is a tRNA with a 3' CCA end + 2 CTP + ATP = a tRNA with a 3' CCACCA end + 3 diphosphate. Its function is as follows. Catalyzes the addition and repair of the essential 3'-terminal CCA sequence in tRNAs without using a nucleic acid template. Adds these three nucleotides in the order of C, C, and A to the tRNA nucleotide-73, using CTP and ATP as substrates and producing inorganic pyrophosphate. tRNA 3'-terminal CCA addition is required both for tRNA processing and repair. Also involved in tRNA surveillance by mediating tandem CCA addition to generate a CCACCA at the 3' terminus of unstable tRNAs. While stable tRNAs receive only 3'-terminal CCA, unstable tRNAs are marked with CCACCA and rapidly degraded. In Staphylococcus aureus (strain MSSA476), this protein is CCA-adding enzyme.